We begin with the raw amino-acid sequence, 571 residues long: Sulfite reductase [NADPH] hemoprotein beta-component (571 aa).

Residues cysteine 435, cysteine 441, cysteine 480, and cysteine 484 each contribute to the [4Fe-4S] cluster site. Cysteine 484 is a siroheme binding site.

The protein belongs to the nitrite and sulfite reductase 4Fe-4S domain family. Alpha(8)-beta(8). The alpha component is a flavoprotein, the beta component is a hemoprotein. Siroheme is required as a cofactor. Requires [4Fe-4S] cluster as cofactor.

It carries out the reaction hydrogen sulfide + 3 NADP(+) + 3 H2O = sulfite + 3 NADPH + 4 H(+). The protein operates within sulfur metabolism; hydrogen sulfide biosynthesis; hydrogen sulfide from sulfite (NADPH route): step 1/1. Its function is as follows. Component of the sulfite reductase complex that catalyzes the 6-electron reduction of sulfite to sulfide. This is one of several activities required for the biosynthesis of L-cysteine from sulfate. This is Sulfite reductase [NADPH] hemoprotein beta-component from Dickeya chrysanthemi (strain Ech1591) (Dickeya zeae (strain Ech1591)).